A 354-amino-acid polypeptide reads, in one-letter code: MTAPTLTDLTDRAREIFRLVVEGYIASGHPVGSKALAGHGSVNLSPASIRSVLQELQDAGLLAAPHTSAGRMPTEFGLRLFVDGIMQVAEPSAAERAQIERGLVAGGTIESALAAASTALSELSAGAAVVMVPKREPRLVQISFVPLSPLRALAVLVSEDGGIENRVIDLPEPVGPSALEQAGNYLTSRLHGRTLGEAAGVVRAEIAGGRSALDEASADLVQRGLVVWTQDATARPVMVVRGQANLLDETALQDIERVRQLLEELEGAEAIARVLDAAREAQATRIFIGSENRLFSLSGSSVIASPWRDGDGRVVGVVGVIGPTRLNYARVVPMVDFTAQTLGKFIGQDGFSRK.

This sequence belongs to the HrcA family.

Its function is as follows. Negative regulator of class I heat shock genes (grpE-dnaK-dnaJ and groELS operons). Prevents heat-shock induction of these operons. This is Heat-inducible transcription repressor HrcA from Novosphingobium aromaticivorans (strain ATCC 700278 / DSM 12444 / CCUG 56034 / CIP 105152 / NBRC 16084 / F199).